Consider the following 1019-residue polypeptide: Phosphatidylinositol 3,4,5-trisphosphate 5-phosphatase 1 (1019 aa).

The SH2 domain maps to 5 to 101 (WYHGNITRSK…GLVTHLQYPI (97 aa)). Over residues 103–116 (KEEEGPEEPDEEQE) the composition is skewed to acidic residues. 2 disordered regions span residues 103 to 133 (KEEEGPEEPDEEQEPAPPNVPPRNFAFTPPS) and 909 to 1019 (ETQN…PPTA). The short motif at 120–125 (PNVPPR) is the SH3-binding 1 element. Composition is skewed to polar residues over residues 909 to 931 (ETQNSMDHTASVAAISSQAKQSP) and 958 to 980 (PITSPPRTTLSTQKFSHSNTNRT). An SH3-binding 2 motif is present at residues 966-971 (TLSTQK). Residues 1004 to 1007 (NPLY) carry the NPXY motif motif. Y1007 is subject to Phosphotyrosine. The segment covering 1010–1019 (VNNTLYPPTA) has biased composition (polar residues).

The protein belongs to the inositol 1,4,5-trisphosphate 5-phosphatase family. In terms of processing, tyrosine phosphorylated by the members of the SRC family after exposure to a diverse array of extracellular stimuli.

It localises to the cytoplasm. It is found in the cell membrane. The protein resides in the membrane raft. Its subcellular location is the cytoskeleton. The enzyme catalyses a 1,2-diacyl-sn-glycero-3-phospho-(1D-myo-inositol-3,4,5-trisphosphate) + H2O = a 1,2-diacyl-sn-glycero-3-phospho-(1D-myo-inositol-3,4-bisphosphate) + phosphate. The catalysed reaction is 1D-myo-inositol 1,3,4,5-tetrakisphosphate + H2O = 1D-myo-inositol 1,3,4-trisphosphate + phosphate. It catalyses the reaction a 1,2-diacyl-sn-glycero-3-phospho-(1D-myo-inositol-4,5-bisphosphate) + H2O = a 1,2-diacyl-sn-glycero-3-phospho-(1D-myo-inositol 4-phosphate) + phosphate. Phosphatidylinositol (PtdIns) phosphatase that specifically hydrolyzes the 5-phosphate of phosphatidylinositol-3,4,5-trisphosphate (PtdIns(3,4,5)P3) to produce PtdIns(3,4)P2, thereby negatively regulating the PI3K (phosphoinositide 3-kinase) pathways. Able also to hydrolyzes the 5-phosphate of phosphatidylinositol-4,5-bisphosphate (PtdIns(4,5)P3) and inositol 1,3,4,5-tetrakisphosphate. Acts as a negative regulator of B-cell antigen receptor signaling. Mediates signaling from the FC-gamma-RIIB receptor (FCGR2B), playing a central role in terminating signal transduction from activating immune/hematopoietic cell receptor systems. Acts as a negative regulator of myeloid cell proliferation/survival and chemotaxis, mast cell degranulation, immune cells homeostasis, integrin alpha-IIb/beta-3 signaling in platelets and JNK signaling in B-cells. The sequence is that of Phosphatidylinositol 3,4,5-trisphosphate 5-phosphatase 1 (inpp5d) from Xenopus laevis (African clawed frog).